A 504-amino-acid chain; its full sequence is Maturase K (504 aa).

Belongs to the intron maturase 2 family. MatK subfamily.

It localises to the plastid. It is found in the chloroplast. Functionally, usually encoded in the trnK tRNA gene intron. Probably assists in splicing its own and other chloroplast group II introns. This Impatiens capensis (Spotted jewelweed) protein is Maturase K.